The chain runs to 181 residues: Inner membrane-spanning protein YciB (181 aa).

The next 5 helical transmembrane spans lie at 10–30 (LIIFFALYKFYDIYVATGALI), 50–70 (MQLITFVMVALFGGMTLALHD), 80–100 (IVYVVFALGLTISQIMGKPAI), 120–140 (WAWVMFFSGCAALNLYVAYHL), and 148–168 (FKVFGLLAATLVFTLLTGGYI).

This sequence belongs to the YciB family.

It localises to the cell inner membrane. In terms of biological role, plays a role in cell envelope biogenesis, maintenance of cell envelope integrity and membrane homeostasis. This Vibrio cholerae serotype O1 (strain ATCC 39315 / El Tor Inaba N16961) protein is Inner membrane-spanning protein YciB.